A 120-amino-acid polypeptide reads, in one-letter code: NAD(P)H-quinone oxidoreductase subunit 3, chloroplastic (120 aa).

The next 3 membrane-spanning stretches (helical) occupy residues 9–29 (IFWA…XISG), 64–84 (MFAL…PWAM), and 88–108 (VLGV…IVGL).

This sequence belongs to the complex I subunit 3 family. NDH is composed of at least 16 different subunits, 5 of which are encoded in the nucleus.

It localises to the plastid. Its subcellular location is the chloroplast thylakoid membrane. It carries out the reaction a plastoquinone + NADH + (n+1) H(+)(in) = a plastoquinol + NAD(+) + n H(+)(out). It catalyses the reaction a plastoquinone + NADPH + (n+1) H(+)(in) = a plastoquinol + NADP(+) + n H(+)(out). Its function is as follows. NDH shuttles electrons from NAD(P)H:plastoquinone, via FMN and iron-sulfur (Fe-S) centers, to quinones in the photosynthetic chain and possibly in a chloroplast respiratory chain. The immediate electron acceptor for the enzyme in this species is believed to be plastoquinone. Couples the redox reaction to proton translocation, and thus conserves the redox energy in a proton gradient. This is NAD(P)H-quinone oxidoreductase subunit 3, chloroplastic from Eucalyptus globulus subsp. globulus (Tasmanian blue gum).